The primary structure comprises 831 residues: Multiphosphoryl transfer protein (831 aa).

The HPr domain occupies 1 to 90 (MLTIQFLCPL…EYIQVRFIDS (90 aa)). Catalysis depends on His-15, which acts as the Pros-phosphohistidine intermediate; for HPr activity. Phosphohistidine; by EI is present on His-15. The tract at residues 119–650 (GNVLASGVGV…AVKSQLRQLD (532 aa)) is PTS EI. His-298 serves as the catalytic Tele-phosphohistidine intermediate; for PTS EI activity. His-298 carries the post-translational modification Phosphohistidine; by autocatalysis. Positions 405 and 441 each coordinate phosphoenolpyruvate. Residues Glu-540 and Asp-564 each coordinate Mg(2+). Residues 563–564 (ND) and Arg-574 each bind phosphoenolpyruvate. Cys-611 serves as the catalytic Proton donor; for EI activity. The 144-residue stretch at 685–828 (PLLALENIFV…QSILTLLETE (144 aa)) folds into the PTS EIIA type-2 domain. The Tele-phosphohistidine intermediate; for PTS EIIA activity role is filled by His-747. His-747 carries the post-translational modification Phosphohistidine; by HPr.

It belongs to the PEP-utilizing enzyme family. The cofactor is Mg(2+).

It is found in the cytoplasm. The enzyme catalyses L-histidyl-[protein] + phosphoenolpyruvate = N(pros)-phospho-L-histidyl-[protein] + pyruvate. It catalyses the reaction D-fructose(out) + N(pros)-phospho-L-histidyl-[protein] = D-fructose 1-phosphate(in) + L-histidyl-[protein]. Multifunctional protein that includes general (non sugar-specific) and sugar-specific components of the phosphoenolpyruvate-dependent sugar phosphotransferase system (sugar PTS). This major carbohydrate active transport system catalyzes the phosphorylation of incoming sugar substrates concomitantly with their translocation across the cell membrane. The enzyme II FryABC PTS system is involved in fructose transport. This chain is Multiphosphoryl transfer protein (fryA), found in Escherichia coli O157:H7.